The sequence spans 458 residues: MTDAATNMRLKLPITCFILEIILIILFGTLVQYDYETDAKEWHNTSHQDYENDFYFRYPSFQDVHVMIFVGFGFLMTFLQRYGFGSVGFNFLIAAFSLQWATLMQGFFHGMHGGKIHIGVESMINADFCTGSVLISFGAVLGKTSPIQLLTMAIFEVTLFAVNEFILLSLLGTKDAGGSMTIHTFGAYFGLMVTRILYRPNLDKSKHRNSSVYHSDLFAMIGTVYLWMFWPSFNSAITAHGDDQHRTALNTYYSLAACTLATYGMSAITSHDGKLDMVHIQNAALAGGVAVGTAGEMMLTPFGSMIVGFMAGIISVLGFKFLSPILEDKLKIQDTCGIHNLHGMPGVLGAIVGAVTAALATTDVYGQGMADVFPAVADGSVNATKQGGIQALSLAITLGIAVLGGLIVGFVLKLPVFGTPPDTLCFEDSVYWEVPGSESPEEGELTSVKPEETEHLNS.

Topologically, residues methionine 1 to lysine 11 are cytoplasmic. A helical membrane pass occupies residues leucine 12–glutamine 32. Residues tyrosine 33 to tyrosine 58 lie on the Extracellular side of the membrane. A glycan (N-linked (GlcNAc...) asparagine) is linked at asparagine 44. The helical transmembrane segment at proline 59 to leucine 79 threads the bilayer. The Cytoplasmic segment spans residues glutamine 80 to glycine 83. The helical transmembrane segment at phenylalanine 84–methionine 104 threads the bilayer. Residues glutamine 105–glutamate 121 are Extracellular-facing. Residues serine 122 to glycine 142 form a helical membrane-spanning segment. Topologically, residues lysine 143–threonine 151 are cytoplasmic. Residues methionine 152–glycine 172 form a helical membrane-spanning segment. The Extracellular segment spans residues threonine 173–alanine 176. The chain crosses the membrane as a helical span at residues glycine 177–leucine 197. At tyrosine 198–aspartate 216 the chain is on the cytoplasmic side. Residues leucine 217 to isoleucine 237 traverse the membrane as a helical segment. Residues threonine 238–threonine 247 are Extracellular-facing. Residues alanine 248–serine 270 traverse the membrane as a helical segment. Residues histidine 271–lysine 274 are Cytoplasmic-facing. A helical transmembrane segment spans residues leucine 275–glycine 295. Over glutamate 296–methionine 298 the chain is Extracellular. A helical membrane pass occupies residues leucine 299–phenylalanine 319. The Cytoplasmic segment spans residues lysine 320–asparagine 340. The chain crosses the membrane as a helical span at residues leucine 341 to threonine 361. The Extracellular portion of the chain corresponds to threonine 362–alanine 391. Residues leucine 392–leucine 412 form a helical membrane-spanning segment. Topologically, residues lysine 413–serine 458 are cytoplasmic. The segment at glycine 436 to serine 458 is disordered. Basic and acidic residues predominate over residues lysine 449–serine 458.

The protein belongs to the ammonium transporter (TC 2.A.49) family. Rh subfamily. As to expression, specifically expressed in the gill by pavement cells (at protein level).

The protein resides in the apicolateral cell membrane. The protein localises to the cytoplasmic vesicle membrane. Functionally, functions as an ammonia transporter. May play a role in the elimination of ammonia in the gill. This chain is Ammonium transporter Rh type B (rhbg), found in Takifugu rubripes (Japanese pufferfish).